The following is a 145-amino-acid chain: Large ribosomal subunit protein uL11 (145 aa).

The protein belongs to the universal ribosomal protein uL11 family. In terms of assembly, part of the ribosomal stalk of the 50S ribosomal subunit. Interacts with L10 and the large rRNA to form the base of the stalk. L10 forms an elongated spine to which L12 dimers bind in a sequential fashion forming a multimeric L10(L12)X complex. Post-translationally, one or more lysine residues are methylated.

In terms of biological role, forms part of the ribosomal stalk which helps the ribosome interact with GTP-bound translation factors. This chain is Large ribosomal subunit protein uL11, found in Corynebacterium glutamicum (strain ATCC 13032 / DSM 20300 / JCM 1318 / BCRC 11384 / CCUG 27702 / LMG 3730 / NBRC 12168 / NCIMB 10025 / NRRL B-2784 / 534).